A 283-amino-acid chain; its full sequence is Thymidylate synthase (283 aa).

R22 provides a ligand contact to dUMP. C160 acts as the Nucleophile in catalysis. DUMP is bound by residues 180–183 (RSCD), N191, and 221–223 (HIY). D183 contributes to the (6R)-5,10-methylene-5,6,7,8-tetrahydrofolate binding site. S282 lines the (6R)-5,10-methylene-5,6,7,8-tetrahydrofolate pocket.

It belongs to the thymidylate synthase family. Bacterial-type ThyA subfamily. As to quaternary structure, homodimer.

The protein resides in the cytoplasm. It carries out the reaction dUMP + (6R)-5,10-methylene-5,6,7,8-tetrahydrofolate = 7,8-dihydrofolate + dTMP. The protein operates within pyrimidine metabolism; dTTP biosynthesis. Catalyzes the reductive methylation of 2'-deoxyuridine-5'-monophosphate (dUMP) to 2'-deoxythymidine-5'-monophosphate (dTMP) while utilizing 5,10-methylenetetrahydrofolate (mTHF) as the methyl donor and reductant in the reaction, yielding dihydrofolate (DHF) as a by-product. This enzymatic reaction provides an intracellular de novo source of dTMP, an essential precursor for DNA biosynthesis. This is Thymidylate synthase from Mannheimia succiniciproducens (strain KCTC 0769BP / MBEL55E).